The following is a 374-amino-acid chain: Eukaryotic translation initiation factor 3 subunit M (374 aa).

Position 2 is an N-acetylserine (serine 2). Phosphoserine is present on residues serine 2 and serine 152. Positions 180–339 (AASKVMVELL…RKVVVSHSTH (160 aa)) constitute a PCI domain. An N6-acetyllysine modification is found at lysine 254. An interaction with HSV-1 and HSV-2 region spans residues 344–374 (KQQWQQLYDTLNAWKQNLNKVKNSLLSLSDT). Serine 367 is subject to Phosphoserine.

As to quaternary structure, component of the eukaryotic translation initiation factor 3 (eIF-3) complex, which is composed of 13 subunits: EIF3A, EIF3B, EIF3C, EIF3D, EIF3E, EIF3F, EIF3G, EIF3H, EIF3I, EIF3J, EIF3K, EIF3L and EIF3M. The eIF-3 complex appears to include 3 stable modules: module A is composed of EIF3A, EIF3B, EIF3G and EIF3I; module B is composed of EIF3F, EIF3H, and EIF3M; and module C is composed of EIF3C, EIF3D, EIF3E, EIF3K and EIF3L. EIF3C of module C binds EIF3B of module A and EIF3H of module B, thereby linking the three modules. EIF3J is a labile subunit that binds to the eIF-3 complex via EIF3B. The eIF-3 complex interacts with RPS6KB1 under conditions of nutrient depletion. Mitogenic stimulation leads to binding and activation of a complex composed of MTOR and RPTOR, leading to phosphorylation and release of RPS6KB1 and binding of EIF4B to eIF-3. As to expression, broadly expressed.

Its subcellular location is the cytoplasm. Functionally, component of the eukaryotic translation initiation factor 3 (eIF-3) complex, which is required for several steps in the initiation of protein synthesis. The eIF-3 complex associates with the 40S ribosome and facilitates the recruitment of eIF-1, eIF-1A, eIF-2:GTP:methionyl-tRNAi and eIF-5 to form the 43S pre-initiation complex (43S PIC). The eIF-3 complex stimulates mRNA recruitment to the 43S PIC and scanning of the mRNA for AUG recognition. The eIF-3 complex is also required for disassembly and recycling of post-termination ribosomal complexes and subsequently prevents premature joining of the 40S and 60S ribosomal subunits prior to initiation. The eIF-3 complex specifically targets and initiates translation of a subset of mRNAs involved in cell proliferation, including cell cycling, differentiation and apoptosis, and uses different modes of RNA stem-loop binding to exert either translational activation or repression. In terms of biological role, (Microbial infection) May favor virus entry in case of infection with herpes simplex virus 1 (HSV1) or herpes simplex virus 2 (HSV2). The protein is Eukaryotic translation initiation factor 3 subunit M of Homo sapiens (Human).